The sequence spans 118 residues: MEMKNMVVGLFLIAAFALPALATSFEKDFITHETVQAILKKVGPSSNGMLDEQAISALTGKTIISNPVLEEALLTHSNSINALGGTLPCGESCVWIPCISAVVGCSCKSKVCYKNSLA.

A signal peptide spans 1-22 (MEMKNMVVGLFLIAAFALPALA). A propeptide spanning residues 23-84 (TSFEKDFITH…THSNSINALG (62 aa)) is cleaved from the precursor. Positions 85-115 (GTLPCGESCVWIPCISAVVGCSCKSKVCYKN) form a cross-link, cyclopeptide (Gly-Asn). 3 disulfide bridges follow: cysteine 89–cysteine 105, cysteine 93–cysteine 107, and cysteine 98–cysteine 112. The propeptide occupies 116–118 (SLA).

In terms of processing, cycloviolacin-O11 is a cyclic peptide. In terms of tissue distribution, expressed in leaves, petals and petioles but not in roots and runners (at protein level).

Functionally, probably participates in a plant defense mechanism. This chain is Cycloviolacin-O11 (Voc2), found in Viola odorata (Sweet violet).